Here is a 129-residue protein sequence, read N- to C-terminus: ASCETTVTSGDTMTYSTRSISVPASCAEFTVNFEHKGHMPKTGMGHNWVLAKSADVGDVAKEGAHAGADNNFVTPGDKRVIAFTPIIGGGEKTSVKFKVSALSKDEAYTYFCSYPGHFSMMRGTLKLEE.

Residues Ala1–Glu129 form the Plastocyanin-like domain. An intrachain disulfide couples Cys3 to Cys26. 4 residues coordinate Cu cation: His46, Cys112, His117, and Met121.

Its subcellular location is the periplasm. This methylothroph organism uses azurin in the oxidation of methylamine. Iso-2 is probably the acceptor of electrons from methylamine dehydrogenase. The protein is Azurin iso-2 of Methylomonas sp. (strain J).